A 516-amino-acid polypeptide reads, in one-letter code: 2-isopropylmalate synthase (516 aa).

The Pyruvate carboxyltransferase domain occupies 5-267 (VIIFDTTLRD…STNIVHKEIY (263 aa)). Residues aspartate 14, histidine 202, histidine 204, and asparagine 238 each coordinate Mn(2+). The interval 392-516 (YLKFFSVQSI…NKKLKNLKKY (125 aa)) is regulatory domain.

This sequence belongs to the alpha-IPM synthase/homocitrate synthase family. LeuA type 1 subfamily. Homodimer. The cofactor is Mn(2+).

Its subcellular location is the cytoplasm. The enzyme catalyses 3-methyl-2-oxobutanoate + acetyl-CoA + H2O = (2S)-2-isopropylmalate + CoA + H(+). The protein operates within amino-acid biosynthesis; L-leucine biosynthesis; L-leucine from 3-methyl-2-oxobutanoate: step 1/4. Functionally, catalyzes the condensation of the acetyl group of acetyl-CoA with 3-methyl-2-oxobutanoate (2-ketoisovalerate) to form 3-carboxy-3-hydroxy-4-methylpentanoate (2-isopropylmalate). The protein is 2-isopropylmalate synthase of Buchnera aphidicola subsp. Diuraphis noxia.